The following is a 304-amino-acid chain: Porphobilinogen deaminase (304 aa).

Cysteine 241 bears the S-(dipyrrolylmethanemethyl)cysteine mark.

It belongs to the HMBS family. As to quaternary structure, monomer. Requires dipyrromethane as cofactor.

It catalyses the reaction 4 porphobilinogen + H2O = hydroxymethylbilane + 4 NH4(+). Its pathway is porphyrin-containing compound metabolism; protoporphyrin-IX biosynthesis; coproporphyrinogen-III from 5-aminolevulinate: step 2/4. In terms of biological role, tetrapolymerization of the monopyrrole PBG into the hydroxymethylbilane pre-uroporphyrinogen in several discrete steps. This Vesicomyosocius okutanii subsp. Calyptogena okutanii (strain HA) protein is Porphobilinogen deaminase.